Here is a 126-residue protein sequence, read N- to C-terminus: Glycine cleavage system H protein (126 aa).

One can recognise a Lipoyl-binding domain in the interval 21–103; sequence TATIGISEHA…YEGGWIVKVK (83 aa). Position 62 is an N6-lipoyllysine (K62).

This sequence belongs to the GcvH family. As to quaternary structure, the glycine cleavage system is composed of four proteins: P, T, L and H. It depends on (R)-lipoate as a cofactor.

In terms of biological role, the glycine cleavage system catalyzes the degradation of glycine. The H protein shuttles the methylamine group of glycine from the P protein to the T protein. The protein is Glycine cleavage system H protein of Vibrio campbellii (strain ATCC BAA-1116).